The chain runs to 347 residues: Ileal sodium/bile acid cotransporter (347 aa).

Topologically, residues 1–29 (MSNLTVGCLANATVCEGASCVAPESNFNA) are extracellular. Residues Asn-3 and Asn-11 are each glycosylated (N-linked (GlcNAc...) asparagine). The helical transmembrane segment at 30–50 (ILSVVLSTVLTILLALVMFSM) threads the bilayer. Residues 51–83 (GCNVEIKKFLGHIRRPWGIFIGFLCQFGIMPLT) are Cytoplasmic-facing. Residues 84–104 (GFVLAVAFGIMPIQAVVVLIM) traverse the membrane as a helical segment. Residues 105–127 (GCCPGGTASNILAYWVDGDMDLS) are Extracellular-facing. The chain crosses the membrane as a helical span at residues 128–148 (VSMTTCSTLLALGMMPLCLYV). Residues 149–158 (YTKMWVDSGT) lie on the Cytoplasmic side of the membrane. The helical transmembrane segment at 159–179 (IVIPYDNIGTSLVALVVPVSI) threads the bilayer. Over 180 to 196 (GMFVNHKWPQKAKIILK) the chain is Extracellular. A helical membrane pass occupies residues 197-217 (VGSIAGAVLIVLIAVVGGILY). Over 218–225 (QSAWIIEP) the chain is Cytoplasmic. A helical transmembrane segment spans residues 226–246 (KLWIIGTIFPMAGYSLGFFLA). At 247–289 (RIAGQPWYRCRTVALETGMQNTQLCSTIVQLSFSPEDLTYVFT) the chain is on the extracellular side. Residues 290 to 310 (FPLIYSIFQIAFAAIFLGIYV) traverse the membrane as a helical segment. Topologically, residues 311–347 (AYRKCHGKNDAEFPDIKDTKTEPESSFHQMNGGFQPE) are cytoplasmic. Over residues 323 to 335 (FPDIKDTKTEPES) the composition is skewed to basic and acidic residues. The interval 323–347 (FPDIKDTKTEPESSFHQMNGGFQPE) is disordered. Ser-336 carries the phosphoserine modification.

This sequence belongs to the bile acid:sodium symporter (BASS) (TC 2.A.28) family. As to quaternary structure, monomer and homodimer.

Its subcellular location is the membrane. It carries out the reaction taurocholate(out) + 2 Na(+)(out) = taurocholate(in) + 2 Na(+)(in). The catalysed reaction is cholate(out) + 2 Na(+)(out) = cholate(in) + 2 Na(+)(in). The enzyme catalyses taurochenodeoxycholate(out) + 2 Na(+)(out) = taurochenodeoxycholate(in) + 2 Na(+)(in). It catalyses the reaction tauroursodeoxycholate(out) + 2 Na(+)(out) = tauroursodeoxycholate(in) + 2 Na(+)(in). It carries out the reaction glycocholate(out) + 2 Na(+)(out) = glycocholate(in) + 2 Na(+)(in). The catalysed reaction is tauronorcholate(out) + 2 Na(+)(out) = tauronorcholate(in) + 2 Na(+)(in). The enzyme catalyses tauroallocholate(out) + 2 Na(+)(out) = tauroallocholate(in) + 2 Na(+)(in). It catalyses the reaction taurodeoxycholate(out) + 2 Na(+)(out) = taurodeoxycholate(in) + 2 Na(+)(in). It carries out the reaction tauro-beta-muricholate(out) + 2 Na(+)(out) = tauro-beta-muricholate(in) + 2 Na(+)(in). Plays a critical role in the sodium-dependent reabsorption of bile acids from the lumen of the small intestine. Transports various bile acids, unconjugated or conjugated, such as cholate and taurocholate. Also responsible for bile acid transport in the renal proximal tubules, a salvage mechanism that helps conserve bile acids. Works collaboratively with the Na(+)-taurocholate cotransporting polypeptide (NTCP), the organic solute transporter (OST), and the bile salt export pump (BSEP), to ensure efficacious biological recycling of bile acids during enterohepatic circulation. The sequence is that of Ileal sodium/bile acid cotransporter (SLC10A2) from Oryctolagus cuniculus (Rabbit).